The sequence spans 345 residues: Phosphoribosylformylglycinamidine cyclo-ligase (345 aa).

This sequence belongs to the AIR synthase family.

It localises to the cytoplasm. The enzyme catalyses 2-formamido-N(1)-(5-O-phospho-beta-D-ribosyl)acetamidine + ATP = 5-amino-1-(5-phospho-beta-D-ribosyl)imidazole + ADP + phosphate + H(+). It functions in the pathway purine metabolism; IMP biosynthesis via de novo pathway; 5-amino-1-(5-phospho-D-ribosyl)imidazole from N(2)-formyl-N(1)-(5-phospho-D-ribosyl)glycinamide: step 2/2. This is Phosphoribosylformylglycinamidine cyclo-ligase from Chromobacterium violaceum (strain ATCC 12472 / DSM 30191 / JCM 1249 / CCUG 213 / NBRC 12614 / NCIMB 9131 / NCTC 9757 / MK).